A 126-amino-acid chain; its full sequence is Large ribosomal subunit protein uL29 (126 aa).

Belongs to the universal ribosomal protein uL29 family.

In Dictyostelium discoideum (Social amoeba), this protein is Large ribosomal subunit protein uL29 (rpl35).